We begin with the raw amino-acid sequence, 307 residues long: Olfactory receptor 5AC1 (307 aa).

Residues 1–28 (MAEENKILVTHFVLTGLTDHPGLQAPLF) are Extracellular-facing. The helical transmembrane segment at 29–49 (LVFLVIYLITLVGNLGLMALI) threads the bilayer. Residues 50-56 (WKDPHLH) are Cytoplasmic-facing. A helical transmembrane segment spans residues 57 to 77 (TPIYLFLGSLAFADACTSSSV). Residues 78-99 (TSKMLINFLSKNHMLSMAKCAT) lie on the Extracellular side of the membrane. The cysteines at positions 97 and 179 are disulfide-linked. A helical transmembrane segment spans residues 100 to 120 (QFYFFGSNATTECFLLVVMAY). Residues 121 to 143 (DRYVAICNPLLYPVVMSNSLCTQ) lie on the Cytoplasmic side of the membrane. The helical transmembrane segment at 144–164 (FIGISYFIGFLHSAIHVGLLF) threads the bilayer. Residues 165–195 (RLTFCRSNIIHYFYCEILQLFKISCTNPTVN) lie on the Extracellular side of the membrane. A helical transmembrane segment spans residues 196 to 216 (ILLIFIFSAFIQVFTFMTLIV). The Cytoplasmic segment spans residues 217–239 (SYSYILSAILKKKSEKGRSKAFS). Residues 240-260 (TCSAHLLSVSLFYGTLFFMYV) form a helical membrane-spanning segment. The Extracellular segment spans residues 261–271 (SSRSGSAADQA). Residues 272-292 (KMYSLFYTIIIPLLNPFIYSL) traverse the membrane as a helical segment. The Cytoplasmic segment spans residues 293-307 (RNKEVIDALRRIMKK).

It belongs to the G-protein coupled receptor 1 family.

It is found in the cell membrane. Functionally, odorant receptor. The chain is Olfactory receptor 5AC1 (OR5AC1) from Homo sapiens (Human).